Consider the following 692-residue polypeptide: Proprotein convertase subtilisin/kexin type 9 (692 aa).

An N-terminal signal peptide occupies residues 1–30; the sequence is MGTVSSRRSWWPLPLPLLLLLLLGPAGARA. Positions 31–152 are excised as a propeptide; it reads QEDEDGDYEE…IEEDSSVFAQ (122 aa). A Sulfotyrosine modification is found at Tyr-38. Ser-47 is modified (phosphoserine). The region spanning 77-149 is the Inhibitor I9 domain; it reads TYVVVLKEET…VDYIEEDSSV (73 aa). Residues 155-444 form the Peptidase S8 domain; sequence PWNLERITPA…VLTPNLVAAL (290 aa). Active-site charge relay system residues include Asp-186 and His-226. 2 cysteine pairs are disulfide-bonded: Cys-223/Cys-255 and Cys-323/Cys-358. Ser-386 (charge relay system) is an active-site residue. The segment at 450-692 is C-terminal domain; sequence RAGWQLFCRT…HLVQASQELQ (243 aa). 3 disulfide bridges follow: Cys-457/Cys-527, Cys-477/Cys-526, and Cys-486/Cys-509. Residue Asn-533 is glycosylated (N-linked (GlcNAc...) asparagine). 6 disulfide bridges follow: Cys-534/Cys-601, Cys-552/Cys-600, Cys-562/Cys-588, Cys-608/Cys-679, Cys-626/Cys-678, and Cys-635/Cys-654. Ser-688 carries the post-translational modification Phosphoserine.

This sequence belongs to the peptidase S8 family. As to quaternary structure, monomer. Can self-associate to form dimers and higher multimers which may have increased LDLR degrading activity. The precursor protein but not the mature protein may form multimers. Interacts with APOB, VLDLR, LRP8/APOER2 and BACE1. The full-length immature form (pro-PCSK9) interacts with SCNN1A, SCNN1B and SCNN1G. The pro-PCSK9 form (via C-terminal domain) interacts with LDLR. Interacts (via the C-terminal domain) with ANXA2 (via repeat Annexin 1); the interaction inhibits the degradation of LDLR. Ca(2+) serves as cofactor. Post-translationally, cleavage by furin and PCSK5 generates a truncated inactive protein that is unable to induce LDLR degradation. Undergoes autocatalytic cleavage in the endoplasmic reticulum to release the propeptide from the N-terminus and the cleavage of the propeptide is strictly required for its maturation and activation. The cleaved propeptide however remains associated with the catalytic domain through non-covalent interactions, preventing potential substrates from accessing its active site. As a result, it is secreted from cells as a propeptide-containing, enzymatically inactive protein. In terms of processing, phosphorylation protects the propeptide against proteolysis.

Its subcellular location is the cytoplasm. It localises to the secreted. The protein resides in the endosome. It is found in the lysosome. The protein localises to the cell surface. Its subcellular location is the endoplasmic reticulum. It localises to the golgi apparatus. Its proteolytic activity is autoinhibited by the non-covalent binding of the propeptide to the catalytic domain. Inhibited by EGTA. Its function is as follows. Crucial player in the regulation of plasma cholesterol homeostasis. Binds to low-density lipid receptor family members: low density lipoprotein receptor (LDLR), very low density lipoprotein receptor (VLDLR), apolipoprotein E receptor (LRP1/APOER) and apolipoprotein receptor 2 (LRP8/APOER2), and promotes their degradation in intracellular acidic compartments. Acts via a non-proteolytic mechanism to enhance the degradation of the hepatic LDLR through a clathrin LDLRAP1/ARH-mediated pathway. May prevent the recycling of LDLR from endosomes to the cell surface or direct it to lysosomes for degradation. Can induce ubiquitination of LDLR leading to its subsequent degradation. Inhibits intracellular degradation of APOB via the autophagosome/lysosome pathway in a LDLR-independent manner. Involved in the disposal of non-acetylated intermediates of BACE1 in the early secretory pathway. Inhibits epithelial Na(+) channel (ENaC)-mediated Na(+) absorption by reducing ENaC surface expression primarily by increasing its proteasomal degradation. Regulates neuronal apoptosis via modulation of LRP8/APOER2 levels and related anti-apoptotic signaling pathways. In Macaca mulatta (Rhesus macaque), this protein is Proprotein convertase subtilisin/kexin type 9 (PCSK9).